The primary structure comprises 424 residues: Glutamate-1-semialdehyde 2,1-aminomutase (424 aa).

Lys263 is subject to N6-(pyridoxal phosphate)lysine.

It belongs to the class-III pyridoxal-phosphate-dependent aminotransferase family. HemL subfamily. As to quaternary structure, homodimer. Pyridoxal 5'-phosphate is required as a cofactor.

The protein resides in the cytoplasm. The enzyme catalyses (S)-4-amino-5-oxopentanoate = 5-aminolevulinate. It functions in the pathway porphyrin-containing compound metabolism; protoporphyrin-IX biosynthesis; 5-aminolevulinate from L-glutamyl-tRNA(Glu): step 2/2. In Campylobacter jejuni subsp. jejuni serotype O:2 (strain ATCC 700819 / NCTC 11168), this protein is Glutamate-1-semialdehyde 2,1-aminomutase.